Consider the following 273-residue polypeptide: Putative pyruvate, phosphate dikinase regulatory protein (273 aa).

153–160 (GVSRTSKT) serves as a coordination point for ADP.

The protein belongs to the pyruvate, phosphate/water dikinase regulatory protein family. PDRP subfamily.

The enzyme catalyses N(tele)-phospho-L-histidyl/L-threonyl-[pyruvate, phosphate dikinase] + ADP = N(tele)-phospho-L-histidyl/O-phospho-L-threonyl-[pyruvate, phosphate dikinase] + AMP + H(+). It carries out the reaction N(tele)-phospho-L-histidyl/O-phospho-L-threonyl-[pyruvate, phosphate dikinase] + phosphate + H(+) = N(tele)-phospho-L-histidyl/L-threonyl-[pyruvate, phosphate dikinase] + diphosphate. In terms of biological role, bifunctional serine/threonine kinase and phosphorylase involved in the regulation of the pyruvate, phosphate dikinase (PPDK) by catalyzing its phosphorylation/dephosphorylation. The polypeptide is Putative pyruvate, phosphate dikinase regulatory protein (Sinorhizobium medicae (strain WSM419) (Ensifer medicae)).